The primary structure comprises 643 residues: Asparagine synthetase domain-containing protein 1 (643 aa).

Catalysis depends on cysteine 2, which acts as the For GATase activity. One can recognise a Glutamine amidotransferase type-2 domain in the interval cysteine 2–lysine 184. In terms of domain architecture, Asparagine synthetase spans glutamine 285–lysine 601.

The polypeptide is Asparagine synthetase domain-containing protein 1 (ASNSD1) (Homo sapiens (Human)).